A 266-amino-acid chain; its full sequence is Probable septum site-determining protein MinC (266 aa).

Residues 1 to 21 (MSEAESTPVEEPVVESTEGSE) are compositionally biased toward low complexity. The tract at residues 1–28 (MSEAESTPVEEPVVESTEGSEAIPEVEQ) is disordered.

It belongs to the MinC family. As to quaternary structure, interacts with MinD and FtsZ.

Its function is as follows. Cell division inhibitor that blocks the formation of polar Z ring septums. Rapidly oscillates between the poles of the cell to destabilize FtsZ filaments that have formed before they mature into polar Z rings. Prevents FtsZ polymerization. In Thermosynechococcus vestitus (strain NIES-2133 / IAM M-273 / BP-1), this protein is Probable septum site-determining protein MinC.